A 37-amino-acid polypeptide reads, in one-letter code: Large ribosomal subunit protein bL36 (37 aa).

It belongs to the bacterial ribosomal protein bL36 family.

This Solidesulfovibrio magneticus (strain ATCC 700980 / DSM 13731 / RS-1) (Desulfovibrio magneticus) protein is Large ribosomal subunit protein bL36.